The primary structure comprises 350 residues: Ribonuclease H2 subunit B (350 aa).

Polar residues predominate over residues 134–151 (QDYSNSSDTGENQKSNSK). The interval 134–153 (QDYSNSSDTGENQKSNSKTN) is disordered.

Belongs to the RNase H2 subunit B family. Highly divergent. As to quaternary structure, the RNase 2 complex is a heterotrimer composed of the catalytic subunit RNH201 and of the non-catalytic subunits RNH202 and RNH203.

Its subcellular location is the nucleus. Its function is as follows. Non catalytic subunit of RNase H2, an endonuclease that specifically degrades the RNA of RNA:DNA hybrids. Participates in DNA replication, possibly by mediating the removal of lagging-strand Okazaki fragment RNA primers during DNA replication. Mediates the excision of single ribonucleotides from DNA:RNA duplexes. This Saccharomyces cerevisiae (strain ATCC 204508 / S288c) (Baker's yeast) protein is Ribonuclease H2 subunit B (RNH202).